A 239-amino-acid polypeptide reads, in one-letter code: Probable transcriptional regulatory protein BAA_0622 (239 aa).

It belongs to the TACO1 family. YeeN subfamily.

It localises to the cytoplasm. The polypeptide is Probable transcriptional regulatory protein BAA_0622 (Bacillus anthracis (strain A0248)).